A 1475-amino-acid polypeptide reads, in one-letter code: Amylopullulanase (1475 aa).

An N-terminal signal peptide occupies residues 1-31 (MFKRRALGFLLAFLLVFTAVFGSMPMEFAKA). Ca(2+)-binding residues include D245, N247, D285, D340, N398, D400, N403, D404, G449, and D451. Substrate-binding residues include H524 and R627. The Nucleophile role is filled by D629. The Proton donor role is filled by E658. Residues 734–735 (HD), D794, and R798 each bind substrate. Fibronectin type-III domains are found at residues 928 to 1019 (APQP…PAFP) and 1164 to 1257 (TPTA…TPDI). The 108-residue stretch at 1255–1362 (PDIIPIKVTF…VNDTVQRWRD (108 aa)) folds into the CBM20 domain.

The protein belongs to the glycosyl hydrolase 13 family. Requires Ca(2+) as cofactor.

It catalyses the reaction Endohydrolysis of (1-&gt;4)-alpha-D-glucosidic linkages in polysaccharides containing three or more (1-&gt;4)-alpha-linked D-glucose units.. It carries out the reaction Hydrolysis of (1-&gt;6)-alpha-D-glucosidic linkages in pullulan, amylopectin and glycogen, and in the alpha- and beta-limit dextrins of amylopectin and glycogen.. The polypeptide is Amylopullulanase (apu) (Thermoanaerobacter thermohydrosulfuricus (Clostridium thermohydrosulfuricum)).